Reading from the N-terminus, the 102-residue chain is Putative pterin-4-alpha-carbinolamine dehydratase (102 aa).

It belongs to the pterin-4-alpha-carbinolamine dehydratase family.

It catalyses the reaction (4aS,6R)-4a-hydroxy-L-erythro-5,6,7,8-tetrahydrobiopterin = (6R)-L-erythro-6,7-dihydrobiopterin + H2O. The chain is Putative pterin-4-alpha-carbinolamine dehydratase from Burkholderia cenocepacia (strain HI2424).